The primary structure comprises 1573 residues: Pentafunctional AROM polypeptide 1 (1573 aa).

A 3-dehydroquinate synthase region spans residues 1–380 (MAEPTKISIL…YEPKASVVSN (380 aa)). Residues 44 to 46 (DTN), 81 to 84 (ENSK), 112 to 114 (GGV), and aspartate 117 contribute to the NAD(+) site. Position 128 (arginine 128) interacts with 7-phospho-2-dehydro-3-deoxy-D-arabino-heptonate. Residue 137 to 138 (TT) coordinates NAD(+). 2 residues coordinate 7-phospho-2-dehydro-3-deoxy-D-arabino-heptonate: aspartate 144 and lysine 150. Lysine 159 is a binding site for NAD(+). Asparagine 160 contacts 7-phospho-2-dehydro-3-deoxy-D-arabino-heptonate. NAD(+)-binding positions include 177 to 180 (FIDT) and asparagine 188. Residue glutamate 192 coordinates Zn(2+). 7-phospho-2-dehydro-3-deoxy-D-arabino-heptonate-binding positions include 192 to 195 (EVIK) and lysine 246. Catalysis depends on glutamate 256, which acts as the Proton acceptor; for 3-dehydroquinate synthase activity. 7-phospho-2-dehydro-3-deoxy-D-arabino-heptonate contacts are provided by residues 260–264 (RNLLN) and histidine 267. Histidine 267 provides a ligand contact to Zn(2+). The Proton acceptor; for 3-dehydroquinate synthase activity role is filled by histidine 271. Residues histidine 283 and lysine 352 each contribute to the 7-phospho-2-dehydro-3-deoxy-D-arabino-heptonate site. Residue histidine 283 coordinates Zn(2+). The tract at residues 393–838 (VIPGVPKDLN…WDALKQKFGV (446 aa)) is EPSP synthase. Cysteine 820 (for EPSP synthase activity) is an active-site residue. A shikimate kinase region spans residues 859–1051 (DASIVIIGMR…RRKRLSFFMS (193 aa)). An ATP-binding site is contributed by 866-873 (GMRGAGKT). The tract at residues 1052 to 1273 (LTLTDLRDSG…AAPGQLSAAE (222 aa)) is 3-dehydroquinase. Histidine 1175 serves as the catalytic Proton acceptor; for 3-dehydroquinate dehydratase activity. The Schiff-base intermediate with substrate; for 3-dehydroquinate dehydratase activity role is filled by lysine 1203. The shikimate dehydrogenase stretch occupies residues 1286 to 1573 (AKKFAIFGKP…NAVLGTDETK (288 aa)).

This sequence in the N-terminal section; belongs to the sugar phosphate cyclases superfamily. Dehydroquinate synthase family. The protein in the 2nd section; belongs to the EPSP synthase family. It in the 3rd section; belongs to the shikimate kinase family. In the 4th section; belongs to the type-I 3-dehydroquinase family. This sequence in the C-terminal section; belongs to the shikimate dehydrogenase family. As to quaternary structure, homodimer. Requires Zn(2+) as cofactor.

The protein localises to the cytoplasm. It catalyses the reaction 7-phospho-2-dehydro-3-deoxy-D-arabino-heptonate = 3-dehydroquinate + phosphate. It carries out the reaction 3-dehydroquinate = 3-dehydroshikimate + H2O. The enzyme catalyses shikimate + NADP(+) = 3-dehydroshikimate + NADPH + H(+). The catalysed reaction is shikimate + ATP = 3-phosphoshikimate + ADP + H(+). It catalyses the reaction 3-phosphoshikimate + phosphoenolpyruvate = 5-O-(1-carboxyvinyl)-3-phosphoshikimate + phosphate. The protein operates within metabolic intermediate biosynthesis; chorismate biosynthesis; chorismate from D-erythrose 4-phosphate and phosphoenolpyruvate: step 2/7. Its pathway is metabolic intermediate biosynthesis; chorismate biosynthesis; chorismate from D-erythrose 4-phosphate and phosphoenolpyruvate: step 3/7. It functions in the pathway metabolic intermediate biosynthesis; chorismate biosynthesis; chorismate from D-erythrose 4-phosphate and phosphoenolpyruvate: step 4/7. It participates in metabolic intermediate biosynthesis; chorismate biosynthesis; chorismate from D-erythrose 4-phosphate and phosphoenolpyruvate: step 5/7. The protein operates within metabolic intermediate biosynthesis; chorismate biosynthesis; chorismate from D-erythrose 4-phosphate and phosphoenolpyruvate: step 6/7. Functionally, the AROM polypeptide catalyzes 5 consecutive enzymatic reactions in prechorismate polyaromatic amino acid biosynthesis. The protein is Pentafunctional AROM polypeptide 1 of Talaromyces marneffei (strain ATCC 18224 / CBS 334.59 / QM 7333) (Penicillium marneffei).